The sequence spans 180 residues: ATP-dependent protease subunit HslV (180 aa).

T8 is a catalytic residue. Na(+) is bound by residues G165, D168, and T171.

The protein belongs to the peptidase T1B family. HslV subfamily. As to quaternary structure, a double ring-shaped homohexamer of HslV is capped on each side by a ring-shaped HslU homohexamer. The assembly of the HslU/HslV complex is dependent on binding of ATP.

The protein localises to the cytoplasm. It catalyses the reaction ATP-dependent cleavage of peptide bonds with broad specificity.. Its activity is regulated as follows. Allosterically activated by HslU binding. In terms of biological role, protease subunit of a proteasome-like degradation complex believed to be a general protein degrading machinery. This is ATP-dependent protease subunit HslV from Lactiplantibacillus plantarum (strain ATCC BAA-793 / NCIMB 8826 / WCFS1) (Lactobacillus plantarum).